Consider the following 305-residue polypeptide: tRNA uridine(34) hydroxylase (305 aa).

A Rhodanese domain is found at 124-219 (QDEETLVVDT…YLETIPKEES (96 aa)). C179 serves as the catalytic Cysteine persulfide intermediate.

It belongs to the TrhO family.

It catalyses the reaction uridine(34) in tRNA + AH2 + O2 = 5-hydroxyuridine(34) in tRNA + A + H2O. Functionally, catalyzes oxygen-dependent 5-hydroxyuridine (ho5U) modification at position 34 in tRNAs. The sequence is that of tRNA uridine(34) hydroxylase from Bartonella bacilliformis (strain ATCC 35685 / KC583 / Herrer 020/F12,63).